The chain runs to 451 residues: MLKYFGTDGVRGVANAGLTPEMAFKLGRDGGYVLTKDKKDGERAKVLVSRDTRISGQMLEYALISGLLSVGIEVLEVGVITTPGLSYLVRAQGADAGVQISASHNPVEDNGIKFFGSDGLKLSDAKEEEIEKLIDAPEDKLPRPSAEGLGTVTNYHEGASKYLQFIENTLPEELSGIKVVVDGANGAASALISRLFADMGVDFTTIATHPDGLNINDHVGATHTKKLQEEVVKQGAQLGLAFDGDADRCIAVDENGNEVDGDHIMYVIGSYLADHGRLKKDTIVTTVMSNLGFTKALERRGLKNIRTQVGDRYVSEEMRANGYNLGGEQSGHVIISDYHNTGDGMLTGLHLLYVMKDTGKSLSELLSDFKEYPQRLINVPVENKKDWKEHKRITEAIEKVEKELSDEGRIFVRPSGTQSLLRVMTEAPTQELADKYCEEVAKVVEEEMGSN.

The Phosphoserine intermediate role is filled by Ser103. The Mg(2+) site is built by Ser103, Asp243, Asp245, and Asp247. Phosphoserine is present on Ser103.

The protein belongs to the phosphohexose mutase family. The cofactor is Mg(2+). In terms of processing, activated by phosphorylation.

The enzyme catalyses alpha-D-glucosamine 1-phosphate = D-glucosamine 6-phosphate. In terms of biological role, catalyzes the conversion of glucosamine-6-phosphate to glucosamine-1-phosphate. The chain is Phosphoglucosamine mutase from Lactobacillus johnsonii (strain CNCM I-12250 / La1 / NCC 533).